Consider the following 148-residue polypeptide: Puroindoline-B (148 aa).

The N-terminal stretch at 1–19 (MKTLFLLALLALVASTTFA) is a signal peptide. Positions 20 to 29 (QYSEVGGWYN) are excised as a propeptide.

Post-translationally, five disulfide bonds are present. In terms of tissue distribution, endosperm and aleurone layer of developing kernels. In the aleurone layer, mainly localized to starch granules and the surface of the plasma membrane, forming a uniform layer, also abundant in the intercellular space. In the endosperm, mainly localized to starch granules and the plasma membrane, but less abundant in the intercellular space. Not found in roots or coleoptiles.

It localises to the membrane. Its subcellular location is the secreted. The protein resides in the extracellular space. Acts as a membranotoxin, probably through its antibacterial and antifungal activities, contributing to the defense mechanism of the plant against predators. Forms monovalent cation-selective ion channels in membranes. Has antibacterial activity against the Gram-positive bacteria S.aureus and C.michiganensis, and the Gram-negative bacteria E.coli, P.syringae pv phaseoli, A.tumefaciens and E.carotovora subsp carotovora. Acts synergistically with PINA against bacteria. Contributes to grain texture and hardness. The polypeptide is Puroindoline-B (PINB) (Triticum aestivum (Wheat)).